The sequence spans 327 residues: 4-hydroxy-2-oxoglutarate aldolase, mitochondrial (327 aa).

The transit peptide at 1 to 25 (MLVPRVWSSVRLGLSRVLSRTLRGW) directs the protein to the mitochondrion. 77–78 (SN) provides a ligand contact to substrate. The active-site Schiff-base intermediate with substrate is the Lys196. Residues Ser198 and Gly222 each coordinate substrate.

It belongs to the DapA family. In terms of assembly, homotetramer.

The protein localises to the mitochondrion. The enzyme catalyses (4S)-4-hydroxy-2-oxoglutarate = glyoxylate + pyruvate. The catalysed reaction is (4R)-4-hydroxy-2-oxoglutarate = glyoxylate + pyruvate. With respect to regulation, inhibited by divalent cations. Catalyzes the final step in the metabolic pathway of hydroxyproline. This Bos taurus (Bovine) protein is 4-hydroxy-2-oxoglutarate aldolase, mitochondrial (HOGA1).